The following is a 234-amino-acid chain: Ion-translocating oxidoreductase complex subunit E (234 aa).

The next 5 helical transmembrane spans lie at 62–82, 92–112, 116–136, 151–171, and 205–225; these read LGLG…ISLF, IPIY…LMNA, TLYQ…IIIG, IWDG…LGAL, and SFLL…LLAI.

It belongs to the NqrDE/RnfAE family. The complex is composed of six subunits: RnfA, RnfB, RnfC, RnfD, RnfE and RnfG.

The protein localises to the cell inner membrane. Part of a membrane-bound complex that couples electron transfer with translocation of ions across the membrane. The chain is Ion-translocating oxidoreductase complex subunit E from Haemophilus influenzae (strain PittGG).